Consider the following 1066-residue polypeptide: Ubiquitin conjugation factor E4 A (1066 aa).

The interval 33–57 (KEQLKQQSDELPASPDDSDNSVSES) is disordered. Position 386 is an N6-acetyllysine (Lys386). In terms of domain architecture, U-box spans 987–1061 (DACDEFLDPI…QRWLAERKQQ (75 aa)).

Belongs to the ubiquitin conjugation factor E4 family.

It localises to the cytoplasm. It carries out the reaction S-ubiquitinyl-[E2 ubiquitin-conjugating enzyme]-L-cysteine + [acceptor protein]-L-lysine = [E2 ubiquitin-conjugating enzyme]-L-cysteine + N(6)-ubiquitinyl-[acceptor protein]-L-lysine.. The protein operates within protein modification; protein ubiquitination. Functionally, ubiquitin-protein ligase that probably functions as an E3 ligase in conjunction with specific E1 and E2 ligases. May also function as an E4 ligase mediating the assembly of polyubiquitin chains on substrates ubiquitinated by another E3 ubiquitin ligase. Mediates 'Lys-48'-linked polyubiquitination of substrates. The protein is Ubiquitin conjugation factor E4 A of Pongo abelii (Sumatran orangutan).